A 512-amino-acid chain; its full sequence is Transmembrane protein 102 (512 aa).

Over M1–Q267 the chain is Extracellular. Residues P168–E258 are disordered. Basic and acidic residues-rich tracts occupy residues D174–R186 and P195–E209. The segment covering K210 to T226 has biased composition (polar residues). A helical membrane pass occupies residues V268–F284. Over P285–H512 the chain is Cytoplasmic.

Interacts with CSF2RB; this interaction occurs preferentially in the absence of CSF2.

The protein resides in the cell membrane. Its function is as follows. Selectively involved in CSF2 deprivation-induced apoptosis via a mitochondria-dependent pathway. In Bos taurus (Bovine), this protein is Transmembrane protein 102 (TMEM102).